Reading from the N-terminus, the 147-residue chain is D-aminoacyl-tRNA deacylase (147 aa).

The short motif at 136-137 (GP) is the Gly-cisPro motif, important for rejection of L-amino acids element.

This sequence belongs to the DTD family. As to quaternary structure, homodimer.

The protein localises to the cytoplasm. It catalyses the reaction glycyl-tRNA(Ala) + H2O = tRNA(Ala) + glycine + H(+). The enzyme catalyses a D-aminoacyl-tRNA + H2O = a tRNA + a D-alpha-amino acid + H(+). In terms of biological role, an aminoacyl-tRNA editing enzyme that deacylates mischarged D-aminoacyl-tRNAs. Also deacylates mischarged glycyl-tRNA(Ala), protecting cells against glycine mischarging by AlaRS. Acts via tRNA-based rather than protein-based catalysis; rejects L-amino acids rather than detecting D-amino acids in the active site. By recycling D-aminoacyl-tRNA to D-amino acids and free tRNA molecules, this enzyme counteracts the toxicity associated with the formation of D-aminoacyl-tRNA entities in vivo and helps enforce protein L-homochirality. The chain is D-aminoacyl-tRNA deacylase from Streptococcus pneumoniae (strain P1031).